The chain runs to 267 residues: 3-methyl-2-oxobutanoate hydroxymethyltransferase (267 aa).

Mg(2+) contacts are provided by Asp45 and Asp84. 3-methyl-2-oxobutanoate-binding positions include 45-46, Asp84, and Lys113; that span reads DS. Residue Glu115 coordinates Mg(2+). Glu182 serves as the catalytic Proton acceptor.

The protein belongs to the PanB family. As to quaternary structure, homodecamer; pentamer of dimers. The cofactor is Mg(2+).

The protein resides in the cytoplasm. It catalyses the reaction 3-methyl-2-oxobutanoate + (6R)-5,10-methylene-5,6,7,8-tetrahydrofolate + H2O = 2-dehydropantoate + (6S)-5,6,7,8-tetrahydrofolate. The protein operates within cofactor biosynthesis; coenzyme A biosynthesis. Functionally, catalyzes the reversible reaction in which hydroxymethyl group from 5,10-methylenetetrahydrofolate is transferred onto alpha-ketoisovalerate to form ketopantoate. This Saccharolobus islandicus (strain Y.G.57.14 / Yellowstone #1) (Sulfolobus islandicus) protein is 3-methyl-2-oxobutanoate hydroxymethyltransferase.